A 578-amino-acid polypeptide reads, in one-letter code: Interleukin-10 receptor subunit alpha (578 aa).

The N-terminal stretch at 1–21 is a signal peptide; the sequence is MLPCLVVLLAALLSLRLGSDA. Topologically, residues 22-235 are extracellular; that stretch reads HGTELPSPPS…LTRQYFTVTN (214 aa). N-linked (GlcNAc...) asparagine glycans are attached at residues asparagine 50, asparagine 74, asparagine 110, asparagine 154, asparagine 177, and asparagine 189. A disulfide bridge connects residues cysteine 56 and cysteine 75. Residues cysteine 202 and cysteine 223 are joined by a disulfide bond. Residues 236-256 traverse the membrane as a helical segment; the sequence is VIIFFAFVLLLSGALAYCLAL. Residues 257 to 578 lie on the Cytoplasmic side of the membrane; the sequence is QLYVRRRKKL…PLISSLQSSE (322 aa). Positions 313–436 are disordered; sequence LHGSTDSGFG…PPEPEVPGEE (124 aa). Polar residues predominate over residues 316–332; sequence STDSGFGSTKPSLQTEE. The short motif at 318–323 is the BTRC recognition motif element; the sequence is DSGFGS. Residues 357-371 show a composition bias toward low complexity; the sequence is GDSCSSGSSNSTDSG. The span at 377 to 396 shows a compositional bias: polar residues; it reads PSLSPSTGPTWEQQVGSNSR.

The protein belongs to the type II cytokine receptor family. As to quaternary structure, interacts with IL10. Interacts with IL10RB. Interacts (via its cytoplasmic domain) with JAK1 (via N-terminus). Interacts with BTRC; this interaction leads to IL10RA ubiquitination and subsequent degradation. Interacts with STAT3. In terms of assembly, (Microbial infection) Interacts with human cytomegalovirus protein IL10. (Microbial infection) Interacts with Epstein-Barr virus protein IL10. Phosphorylated. Phosphorylation of the cytoplasmic tail induced STAT3 activation. In terms of processing, ubiquitinated by BTRC; ubiquitination leads to endocytosis and subsequent degradation of IL10RA. Primarily expressed in hematopoetic cells including B-cells, T-cells, NK cells, monocytes and macrophages. Not expressed in non-hematopoetic cells such as fibroblasts or endothelial cells.

The protein localises to the cell membrane. The protein resides in the cytoplasm. In terms of biological role, cell surface receptor for the cytokine IL10 that participates in IL10-mediated anti-inflammatory functions, limiting excessive tissue disruption caused by inflammation. Upon binding to IL10, induces a conformational change in IL10RB, allowing IL10RB to bind IL10 as well. In turn, the heterotetrameric assembly complex, composed of two subunits of IL10RA and IL10RB, activates the kinases JAK1 and TYK2 that are constitutively associated with IL10RA and IL10RB respectively. These kinases then phosphorylate specific tyrosine residues in the intracellular domain in IL10RA leading to the recruitment and subsequent phosphorylation of STAT3. Once phosphorylated, STAT3 homodimerizes, translocates to the nucleus and activates the expression of anti-inflammatory genes. In addition, IL10RA-mediated activation of STAT3 inhibits starvation-induced autophagy. In Homo sapiens (Human), this protein is Interleukin-10 receptor subunit alpha (IL10RA).